Consider the following 130-residue polypeptide: Large ribosomal subunit protein bL17 (130 aa).

It belongs to the bacterial ribosomal protein bL17 family. Part of the 50S ribosomal subunit. Contacts protein L32.

This Shewanella loihica (strain ATCC BAA-1088 / PV-4) protein is Large ribosomal subunit protein bL17.